The chain runs to 231 residues: DNA repair protein RecO (231 aa).

Belongs to the RecO family.

Its function is as follows. Involved in DNA repair and RecF pathway recombination. This Coxiella burnetii (strain CbuK_Q154) (Coxiella burnetii (strain Q154)) protein is DNA repair protein RecO.